The following is a 363-amino-acid chain: tRNA(Met) cytidine acetate ligase (363 aa).

ATP is bound by residues 7-20 (IAEFNPFHNGHKYL), Gly-96, Asn-152, and Arg-175.

This sequence belongs to the TmcAL family.

The protein localises to the cytoplasm. The catalysed reaction is cytidine(34) in elongator tRNA(Met) + acetate + ATP = N(4)-acetylcytidine(34) in elongator tRNA(Met) + AMP + diphosphate. In terms of biological role, catalyzes the formation of N(4)-acetylcytidine (ac(4)C) at the wobble position of elongator tRNA(Met), using acetate and ATP as substrates. First activates an acetate ion to form acetyladenylate (Ac-AMP) and then transfers the acetyl group to tRNA to form ac(4)C34. This chain is tRNA(Met) cytidine acetate ligase, found in Streptococcus thermophilus (strain CNRZ 1066).